The following is a 278-amino-acid chain: Elongation factor Ts 1, mitochondrial (278 aa).

It belongs to the EF-Ts family.

Its subcellular location is the mitochondrion. In terms of biological role, associates with the EF-Tu.GDP complex and induces the exchange of GDP to GTP. It remains bound to the aminoacyl-tRNA.EF-Tu.GTP complex up to the GTP hydrolysis stage on the ribosome. The polypeptide is Elongation factor Ts 1, mitochondrial (Trypanosoma cruzi (strain CL Brener)).